We begin with the raw amino-acid sequence, 195 residues long: Protein LIGHT-DEPENDENT SHORT HYPOCOTYLS 7 (195 aa).

2 disordered regions span residues 1-41 and 154-195; these read MASH…LSRY and SQAK…NLAS. Residues 21–36 show a composition bias toward pro residues; it reads QPQPQPHQPQSPPNPP. The ALOG domain occupies 40-167; that stretch reads RYESQKRRDW…ARGVPYKKRK (128 aa). The span at 162–175 shows a compositional bias: basic residues; the sequence is PYKKRKKRKKRNPM. The Nuclear localization signal motif lies at 165 to 169; it reads KRKKR. Over residues 184–195 the composition is skewed to low complexity; it reads TTGTSSSSNLAS.

Belongs to the plant homeotic and developmental regulators ALOG protein family.

The protein resides in the nucleus. Its function is as follows. Probable transcription regulator that acts as a developmental regulator by promoting cell growth in response to light. In Arabidopsis thaliana (Mouse-ear cress), this protein is Protein LIGHT-DEPENDENT SHORT HYPOCOTYLS 7 (LSH7).